Reading from the N-terminus, the 288-residue chain is MGEFSTLLQQGNGWFFIPSAILLGILHGLEPGHSKTMMAAFIIAIKGTVKQAVMLGLAATLSHTAIVWLIALGGMYLSRAFTAQSVEPWLQLISAIIILSTACWMFWRTWRGEQQWLAGNHHHDHDHDHDHDHDHDHDHDHDHDHDHDHHGHIHPEGATSKAYQDAHERAHAADIQRRFDGQTVTNGQILLFGLTGGLIPCPAAITVLLICIQLKAFTLGATMVLSFSLGLALTLVTVGVGAAISVQQAAKRWSGFSTLARRAPYFSSILIGLVGVYMGIHGYTGIMQ.

Over 1 to 12 the chain is Periplasmic; it reads MGEFSTLLQQGN. Residues 13-33 traverse the membrane as a helical segment; sequence GWFFIPSAILLGILHGLEPGH. Topologically, residues 34 to 51 are cytoplasmic; that stretch reads SKTMMAAFIIAIKGTVKQ. The helical transmembrane segment at 52 to 72 threads the bilayer; sequence AVMLGLAATLSHTAIVWLIAL. Residues 73-85 lie on the Periplasmic side of the membrane; the sequence is GGMYLSRAFTAQS. A helical transmembrane segment spans residues 86–106; sequence VEPWLQLISAIIILSTACWMF. At 107–188 the chain is on the cytoplasmic side; the sequence is WRTWRGEQQW…FDGQTVTNGQ (82 aa). Basic and acidic residues predominate over residues 122–155; the sequence is HHDHDHDHDHDHDHDHDHDHDHDHDHDHHGHIHP. The tract at residues 122–166 is disordered; the sequence is HHDHDHDHDHDHDHDHDHDHDHDHDHDHHGHIHPEGATSKAYQDA. A helical transmembrane segment spans residues 189–209; that stretch reads ILLFGLTGGLIPCPAAITVLL. Residues 210–223 lie on the Periplasmic side of the membrane; the sequence is ICIQLKAFTLGATM. Residues 224 to 244 traverse the membrane as a helical segment; that stretch reads VLSFSLGLALTLVTVGVGAAI. At 245 to 265 the chain is on the cytoplasmic side; it reads SVQQAAKRWSGFSTLARRAPY. A helical transmembrane segment spans residues 266–286; it reads FSSILIGLVGVYMGIHGYTGI. The Periplasmic portion of the chain corresponds to 287–288; the sequence is MQ.

It belongs to the NiCoT transporter (TC 2.A.52) family. RcnA subfamily.

It is found in the cell inner membrane. Functionally, efflux system for nickel and cobalt. This chain is Nickel/cobalt efflux system RcnA (rcnA), found in Salmonella typhimurium (strain LT2 / SGSC1412 / ATCC 700720).